The chain runs to 359 residues: Fe-S cluster assembly protein DRE2 (359 aa).

Positions 1 to 148 are N-terminal SAM-like domain; it reads MASTGRVLLL…KPDVAAQQAV (148 aa). Disordered stretches follow at residues 97-116 and 149-210; these read NKAW…NDND and PLKL…PSGV. A linker region spans residues 149 to 246; it reads PLKLGRRKKE…EDELLGEDDM (98 aa). Over residues 152–164 the composition is skewed to basic residues; the sequence is LGRRKKEKERRHP. Residues 167 to 183 are compositionally biased toward polar residues; that stretch reads NDVTNGKVNAPSSNGVN. The segment covering 184–200 has biased composition (low complexity); the sequence is ASTSTATATATTTTTTT. Residues Cys256, Cys267, Cys270, and Cys272 each contribute to the [2Fe-2S] cluster site. Residues 256 to 272 form a fe-S binding site A region; sequence CRPKPGKRRRACKDCSC. [4Fe-4S] cluster is bound by residues Cys322, Cys325, Cys333, and Cys336. 2 consecutive short sequence motifs (cx2C motif) follow at residues 322-325 and 333-336; these read CGNC and CDGC. Residues 322-336 form a fe-S binding site B region; that stretch reads CGNCSLGDAFRCDGC.

The protein belongs to the anamorsin family. As to quaternary structure, monomer. Interacts with TAH18. Interacts with MIA40. It depends on [2Fe-2S] cluster as a cofactor. Requires [4Fe-4S] cluster as cofactor.

It is found in the cytoplasm. The protein localises to the mitochondrion intermembrane space. Its function is as follows. Component of the cytosolic iron-sulfur (Fe-S) protein assembly (CIA) machinery required for the maturation of extramitochondrial Fe-S proteins. Part of an electron transfer chain functioning in an early step of cytosolic Fe-S biogenesis, facilitating the de novo assembly of a [4Fe-4S] cluster on the scaffold complex CFD1-NBP35. Electrons are transferred to DRE2 from NADPH via the FAD- and FMN-containing protein TAH18. TAH18-DRE2 are also required for the assembly of the diferric tyrosyl radical cofactor of ribonucleotide reductase (RNR), probably by providing electrons for reduction during radical cofactor maturation in the catalytic small subunit RNR2. This Blastomyces gilchristii (strain SLH14081) (Blastomyces dermatitidis) protein is Fe-S cluster assembly protein DRE2.